The primary structure comprises 248 residues: Ribonuclease PH (248 aa).

Residues R86 and 124 to 126 (GTR) contribute to the phosphate site.

It belongs to the RNase PH family. Homohexameric ring arranged as a trimer of dimers.

The enzyme catalyses tRNA(n+1) + phosphate = tRNA(n) + a ribonucleoside 5'-diphosphate. Functionally, phosphorolytic 3'-5' exoribonuclease that plays an important role in tRNA 3'-end maturation. Removes nucleotide residues following the 3'-CCA terminus of tRNAs; can also add nucleotides to the ends of RNA molecules by using nucleoside diphosphates as substrates, but this may not be physiologically important. Probably plays a role in initiation of 16S rRNA degradation (leading to ribosome degradation) during starvation. This chain is Ribonuclease PH, found in Clostridium perfringens (strain 13 / Type A).